The chain runs to 344 residues: uncharacterized protein (344 aa).

The N-terminal stretch at 1–19 is a signal peptide; the sequence is MRIIFYLTLLLFIFNKVKS. The propeptide at 323–344 is removed in mature form; sequence SATRNQISIMVLILSVLLVLIL.

The protein resides in the cell membrane. This is an uncharacterized protein from Dictyostelium discoideum (Social amoeba).